The chain runs to 275 residues: MPIKTFRPITPTLRFQTALVNDDITTDKPHKPLLVTKLRTGGRRNSGDLTIRHHGGGHKKKLRLIDFKRDKFGVPGRVATIEYDPNRSSRIALISYADGEKRYILQPVGLKVGQTIMSGPEADILVGNALPLKNIPAGTTVHNVELRPGKGAQMVRSAGASAQLVAKEGDYALLKLPSGETRRVLINCMATIGQVGNTDHENVSIGKAGRNRWKGIRPTNRGVTMNPVDHPHGGGEGKTSGGRHPVTPWGQPTRGYKTRNNKRTDTFIVNRRGKK.

The segment at R212–R259 is disordered.

It belongs to the universal ribosomal protein uL2 family. In terms of assembly, part of the 50S ribosomal subunit. Forms a bridge to the 30S subunit in the 70S ribosome.

One of the primary rRNA binding proteins. Required for association of the 30S and 50S subunits to form the 70S ribosome, for tRNA binding and peptide bond formation. It has been suggested to have peptidyltransferase activity; this is somewhat controversial. Makes several contacts with the 16S rRNA in the 70S ribosome. In Acidobacterium capsulatum (strain ATCC 51196 / DSM 11244 / BCRC 80197 / JCM 7670 / NBRC 15755 / NCIMB 13165 / 161), this protein is Large ribosomal subunit protein uL2.